Here is a 445-residue protein sequence, read N- to C-terminus: Putative ankyrin repeat protein L797 (445 aa).

ANK repeat units follow at residues 73–102 (FMED…DIYS), 285–314 (NHEH…ELVG), 315–344 (NLYI…DIRQ), and 346–375 (LDAF…IINI).

The protein is Putative ankyrin repeat protein L797 of Acanthamoeba polyphaga (Amoeba).